The primary structure comprises 363 residues: 3-isopropylmalate dehydrogenase (363 aa).

NAD(+) is bound at residue 79 to 92 (GPKWEHLPPNDQPE). R100, R110, R139, and D228 together coordinate substrate. D228, D252, and D256 together coordinate Mg(2+). 286-298 (GSAPDIAGKNIAN) provides a ligand contact to NAD(+).

Belongs to the isocitrate and isopropylmalate dehydrogenases family. LeuB type 1 subfamily. As to quaternary structure, homodimer. Mg(2+) serves as cofactor. Mn(2+) is required as a cofactor.

The protein localises to the cytoplasm. The catalysed reaction is (2R,3S)-3-isopropylmalate + NAD(+) = 4-methyl-2-oxopentanoate + CO2 + NADH. The protein operates within amino-acid biosynthesis; L-leucine biosynthesis; L-leucine from 3-methyl-2-oxobutanoate: step 3/4. Catalyzes the oxidation of 3-carboxy-2-hydroxy-4-methylpentanoate (3-isopropylmalate) to 3-carboxy-4-methyl-2-oxopentanoate. The product decarboxylates to 4-methyl-2 oxopentanoate. The polypeptide is 3-isopropylmalate dehydrogenase (Vibrio vulnificus (strain CMCP6)).